The sequence spans 419 residues: Enolase (419 aa).

Residue Gln160 coordinates (2R)-2-phosphoglycerate. Residue Glu204 is the Proton donor of the active site. Positions 240, 283, and 309 each coordinate Mg(2+). (2R)-2-phosphoglycerate is bound by residues Lys334, Arg363, Ser364, and Lys385. The active-site Proton acceptor is the Lys334.

It belongs to the enolase family. It depends on Mg(2+) as a cofactor.

It localises to the cytoplasm. The protein resides in the secreted. Its subcellular location is the cell surface. It catalyses the reaction (2R)-2-phosphoglycerate = phosphoenolpyruvate + H2O. Its pathway is carbohydrate degradation; glycolysis; pyruvate from D-glyceraldehyde 3-phosphate: step 4/5. Functionally, catalyzes the reversible conversion of 2-phosphoglycerate (2-PG) into phosphoenolpyruvate (PEP). It is essential for the degradation of carbohydrates via glycolysis. In Pyrobaculum aerophilum (strain ATCC 51768 / DSM 7523 / JCM 9630 / CIP 104966 / NBRC 100827 / IM2), this protein is Enolase.